A 539-amino-acid polypeptide reads, in one-letter code: Glucose-6-phosphate isomerase (539 aa).

The active-site Proton donor is E340. Active-site residues include H371 and K500.

This sequence belongs to the GPI family.

It is found in the cytoplasm. It carries out the reaction alpha-D-glucose 6-phosphate = beta-D-fructose 6-phosphate. It functions in the pathway carbohydrate biosynthesis; gluconeogenesis. It participates in carbohydrate degradation; glycolysis; D-glyceraldehyde 3-phosphate and glycerone phosphate from D-glucose: step 2/4. In terms of biological role, catalyzes the reversible isomerization of glucose-6-phosphate to fructose-6-phosphate. This chain is Glucose-6-phosphate isomerase, found in Ruegeria pomeroyi (strain ATCC 700808 / DSM 15171 / DSS-3) (Silicibacter pomeroyi).